A 1612-amino-acid polypeptide reads, in one-letter code: Roundabout homolog 1 (1612 aa).

Positions 1 to 19 (MIAEPAHFYLFGLICLCSG) are cleaved as a signal peptide. At 20–858 (SRLRQEDFPP…QQISDVVRQP (839 aa)) the chain is on the extracellular side. 5 consecutive Ig-like C2-type domains span residues 29–125 (PRIV…ASLE), 131–218 (DDFR…AELT), 223–307 (PSFV…ATLT), 312–407 (PHFV…LEVT), and 416–502 (PVIR…AYIE). A disulfide bridge links Cys-50 with Cys-108. Asn-121 is a glycosylation site (N-linked (GlcNAc...) asparagine). Cystine bridges form between Cys-152/Cys-201, Cys-244/Cys-291, and Cys-333/Cys-389. N-linked (GlcNAc...) asparagine glycosylation occurs at Asn-424. Residues Cys-437 and Cys-486 are joined by a disulfide bond. Fibronectin type-III domains follow at residues 524–618 (APSK…TQDV), 637–734 (VVLH…TLEE), and 739–835 (PPRS…LDSH). Residues Asn-751, Asn-781, and Asn-788 are each glycosylated (N-linked (GlcNAc...) asparagine). The chain crosses the membrane as a helical span at residues 859 to 879 (AFIAGIGAACWIILMVFSIWL). Residues 880–1612 (YRHRKKRNGL…NNEELEETES (733 aa)) are Cytoplasmic-facing. Phosphoserine is present on Ser-901. Thr-909 bears the Phosphothreonine mark. A Phosphotyrosine modification is found at Tyr-999. A Phosphoserine modification is found at Ser-1016. Position 1034 is a phosphotyrosine (Tyr-1034). The segment at 1045-1068 (SNNMNNGAGDSSEKHWKPPGQQKP) is disordered. Residue Tyr-1075 is modified to Phosphotyrosine. Disordered regions lie at residues 1088 to 1298 (RAND…ADME), 1313 to 1358 (EQTP…DGSF), and 1381 to 1612 (RRQM…ETES). Polar residues predominate over residues 1098-1107 (PYNQSYDQNT). Low complexity predominate over residues 1108–1124 (GGSYNSSDRGSSTSGSQ). Over residues 1147–1157 (LPPPPAHPPPH) the composition is skewed to pro residues. At Thr-1201 the chain carries Phosphothreonine. A compositionally biased stretch (polar residues) spans 1216-1230 (YSHQSTATLTPSPQE). Residues 1242-1254 (DLGHMPHPPDRRR) are compositionally biased toward basic and acidic residues. The segment covering 1257–1268 (VSPPPPPRPISP) has biased composition (pro residues). Ser-1258 carries the post-translational modification Phosphoserine. Residues 1283 to 1297 (MDTDAPEEEEDEADM) show a composition bias toward acidic residues. Residues 1345 to 1358 (SSGRSSVSSSDGSF) show a composition bias toward low complexity. Positions 1399–1412 (PRPTSPVSTDSNMS) are enriched in polar residues. Positions 1420-1431 (RPAKKQKHQPGH) are enriched in basic residues. Positions 1441–1451 (LPPPPVPPPAI) are enriched in pro residues. Composition is skewed to basic and acidic residues over residues 1477 to 1502 (ARTDRSSDRKGGSYKGREALDGRQVT) and 1510 to 1534 (DPREAQEQPNDGKGRGTRQPKRDLP). Residues 1553 to 1562 (FPTSNNPRDP) show a composition bias toward polar residues. Positions 1563–1575 (SSSSSMSSRGSGS) are enriched in low complexity. The span at 1603 to 1612 (NNEELEETES) shows a compositional bias: acidic residues.

Belongs to the immunoglobulin superfamily. ROBO family. As to quaternary structure, homodimer. Dimerization is mediated by the extracellular domain and is independent of SLIT liganding. Interacts with SLIT1 Interacts with SLIT2. Interacts with FLRT3. Interacts with MYO9B (via Rho-GAP domain). Post-translationally, ubiquitinated. May be deubiquitinated by USP33. In terms of tissue distribution, detected in embryonic thalamus neurons (at protein level). Expressed in embryonal spinal cord. Expressed in embryonal lung, and in adult lung bronchial epithelial cells of large proximal airways.

The protein localises to the cell membrane. It is found in the cell projection. It localises to the axon. Its subcellular location is the endoplasmic reticulum-Golgi intermediate compartment membrane. In terms of biological role, receptor for SLIT1 and SLIT2 that mediates cellular responses to molecular guidance cues in cellular migration, including axonal navigation at the ventral midline of the neural tube and projection of axons to different regions during neuronal development. Interaction with the intracellular domain of FLRT3 mediates axon attraction towards cells expressing NTN1. In axon growth cones, the silencing of the attractive effect of NTN1 by SLIT2 may require the formation of a ROBO1-DCC complex. Plays a role in the regulation of cell migration via its interaction with MYO9B; inhibits MYO9B-mediated stimulation of RHOA GTPase activity, and thereby leads to increased levels of active, GTP-bound RHOA. May be required for lung development. This chain is Roundabout homolog 1 (Robo1), found in Mus musculus (Mouse).